The sequence spans 261 residues: Cytochrome c oxidase subunit 3 (261 aa).

The Mitochondrial matrix portion of the chain corresponds to 1–15; sequence MTHQTHAYHMVNPSP. A helical membrane pass occupies residues 16–34; that stretch reads WPLTGALSALLMTSGLAMW. Residues 35–40 are Mitochondrial intermembrane-facing; sequence FHYNLT. The helical transmembrane segment at 41–66 threads the bilayer; the sequence is LLLTLGMTTNLLTMYQWWRDIIREST. Residues 67 to 72 are Mitochondrial matrix-facing; the sequence is FQGHHT. The helical transmembrane segment at 73–105 threads the bilayer; sequence PIVQKGLRYGMILFIISEVFFFAGFFWAFYHSS. Over 106 to 128 the chain is Mitochondrial intermembrane; sequence LAPTPELGGCWPPTGIIPLNPLE. Residues 129 to 152 form a helical membrane-spanning segment; it reads VPLLNTSVLLASGVSITWAHHSLM. Topologically, residues 153–155 are mitochondrial matrix; sequence EGN. The helical transmembrane segment at 156 to 183 threads the bilayer; that stretch reads RKHMLQALFITISLGVYFTLLQASEYYE. Over 184–190 the chain is Mitochondrial intermembrane; the sequence is TSFTISD. A helical membrane pass occupies residues 191-223; it reads GVYGSTFFMATGFHGLHVIIGSTFLIVCFLRQL. The Mitochondrial matrix portion of the chain corresponds to 224–232; it reads KYHFTSNHH. A helical membrane pass occupies residues 233 to 256; it reads FGFEAAAWYWHFVDVVWLFLYVSI. The Mitochondrial intermembrane segment spans residues 257-261; it reads YWWGS.

It belongs to the cytochrome c oxidase subunit 3 family. As to quaternary structure, component of the cytochrome c oxidase (complex IV, CIV), a multisubunit enzyme composed of 14 subunits. The complex is composed of a catalytic core of 3 subunits MT-CO1, MT-CO2 and MT-CO3, encoded in the mitochondrial DNA, and 11 supernumerary subunits COX4I, COX5A, COX5B, COX6A, COX6B, COX6C, COX7A, COX7B, COX7C, COX8 and NDUFA4, which are encoded in the nuclear genome. The complex exists as a monomer or a dimer and forms supercomplexes (SCs) in the inner mitochondrial membrane with NADH-ubiquinone oxidoreductase (complex I, CI) and ubiquinol-cytochrome c oxidoreductase (cytochrome b-c1 complex, complex III, CIII), resulting in different assemblies (supercomplex SCI(1)III(2)IV(1) and megacomplex MCI(2)III(2)IV(2)).

The protein localises to the mitochondrion inner membrane. The catalysed reaction is 4 Fe(II)-[cytochrome c] + O2 + 8 H(+)(in) = 4 Fe(III)-[cytochrome c] + 2 H2O + 4 H(+)(out). In terms of biological role, component of the cytochrome c oxidase, the last enzyme in the mitochondrial electron transport chain which drives oxidative phosphorylation. The respiratory chain contains 3 multisubunit complexes succinate dehydrogenase (complex II, CII), ubiquinol-cytochrome c oxidoreductase (cytochrome b-c1 complex, complex III, CIII) and cytochrome c oxidase (complex IV, CIV), that cooperate to transfer electrons derived from NADH and succinate to molecular oxygen, creating an electrochemical gradient over the inner membrane that drives transmembrane transport and the ATP synthase. Cytochrome c oxidase is the component of the respiratory chain that catalyzes the reduction of oxygen to water. Electrons originating from reduced cytochrome c in the intermembrane space (IMS) are transferred via the dinuclear copper A center (CU(A)) of subunit 2 and heme A of subunit 1 to the active site in subunit 1, a binuclear center (BNC) formed by heme A3 and copper B (CU(B)). The BNC reduces molecular oxygen to 2 water molecules using 4 electrons from cytochrome c in the IMS and 4 protons from the mitochondrial matrix. In Felis catus (Cat), this protein is Cytochrome c oxidase subunit 3 (MT-CO3).